Here is a 391-residue protein sequence, read N- to C-terminus: Formate-dependent phosphoribosylglycinamide formyltransferase (391 aa).

N(1)-(5-phospho-beta-D-ribosyl)glycinamide is bound by residues 20–21 (EL) and E80. ATP is bound by residues R112, K153, 158–163 (SSGKGQ), 193–196 (EGFI), and E201. The region spanning 117-306 (RLAAETLGLP…EFALHVRAIL (190 aa)) is the ATP-grasp domain. 2 residues coordinate Mg(2+): E265 and E277. Residues D284, K354, and 361–362 (RR) each bind N(1)-(5-phospho-beta-D-ribosyl)glycinamide.

Belongs to the PurK/PurT family. In terms of assembly, homodimer.

The catalysed reaction is N(1)-(5-phospho-beta-D-ribosyl)glycinamide + formate + ATP = N(2)-formyl-N(1)-(5-phospho-beta-D-ribosyl)glycinamide + ADP + phosphate + H(+). It participates in purine metabolism; IMP biosynthesis via de novo pathway; N(2)-formyl-N(1)-(5-phospho-D-ribosyl)glycinamide from N(1)-(5-phospho-D-ribosyl)glycinamide (formate route): step 1/1. Functionally, involved in the de novo purine biosynthesis. Catalyzes the transfer of formate to 5-phospho-ribosyl-glycinamide (GAR), producing 5-phospho-ribosyl-N-formylglycinamide (FGAR). Formate is provided by PurU via hydrolysis of 10-formyl-tetrahydrofolate. This chain is Formate-dependent phosphoribosylglycinamide formyltransferase, found in Shewanella oneidensis (strain ATCC 700550 / JCM 31522 / CIP 106686 / LMG 19005 / NCIMB 14063 / MR-1).